The sequence spans 549 residues: Probable chaperonin-like protein PrmG (549 aa).

It belongs to the chaperonin (HSP60) family.

In terms of biological role, probably plays an essential role in the productive folding of PrmA, and thus in the formation of the active PrmABCD complex. The protein is Probable chaperonin-like protein PrmG (prmG) of Rhodococcus jostii (strain RHA1).